Reading from the N-terminus, the 462-residue chain is Integrator complex subunit 12 (462 aa).

Positions 42–132 (GIDSSYRPSQ…PETQSSPITV (91 aa)) are disordered. The span at 59-86 (ISSTKNISIKQEPKISSSLPSGNNNGKV) shows a compositional bias: polar residues. Lys-68 participates in a covalent cross-link: Glycyl lysine isopeptide (Lys-Gly) (interchain with G-Cter in SUMO2). Residues 88–124 (TTEKVKKEAEKRPADKMKSDITEGVDIPKKPRLEKPE) are compositionally biased toward basic and acidic residues. Ser-128 carries the phosphoserine modification. Residues 159–215 (GLACVVCRQMMVASGNQLVECQECHNLYHRDCHKPQVTDKEANDPRLVWYCARCTRQ) form a PHD-type zinc finger. A Glycyl lysine isopeptide (Lys-Gly) (interchain with G-Cter in SUMO2) cross-link involves residue Lys-254. Residues 301 to 328 (SSAGPSTAKLSSTTQNNTGKPATSSANQ) are compositionally biased toward polar residues. Residues 301–462 (SSAGPSTAKL…KKAAQKKLKK (162 aa)) are disordered. Low complexity-rich tracts occupy residues 347-358 (KIGSNNSTTPTV) and 382-437 (VSKV…GPTS). Residues 449 to 462 (QMVKKKAAQKKLKK) are compositionally biased toward basic residues.

This sequence belongs to the Integrator subunit 12 family. As to quaternary structure, component of the Integrator complex, composed of core subunits INTS1, INTS2, INTS3, INTS4, INTS5, INTS6, INTS7, INTS8, INTS9/RC74, INTS10, INTS11/CPSF3L, INTS12, INTS13, INTS14 and INTS15. The core complex associates with protein phosphatase 2A subunits PPP2CA and PPP2R1A, to form the Integrator-PP2A (INTAC) complex. In terms of processing, dephosphorylated at Ser-128 by the PNUTS-PP1 complex, promoting RNA polymerase II transcription pause-release.

It localises to the nucleus. In terms of biological role, component of the integrator complex, a multiprotein complex that terminates RNA polymerase II (Pol II) transcription in the promoter-proximal region of genes. The integrator complex provides a quality checkpoint during transcription elongation by driving premature transcription termination of transcripts that are unfavorably configured for transcriptional elongation: the complex terminates transcription by (1) catalyzing dephosphorylation of the C-terminal domain (CTD) of Pol II subunit POLR2A/RPB1 and SUPT5H/SPT5, (2) degrading the exiting nascent RNA transcript via endonuclease activity and (3) promoting the release of Pol II from bound DNA. The integrator complex is also involved in terminating the synthesis of non-coding Pol II transcripts, such as enhancer RNAs (eRNAs), small nuclear RNAs (snRNAs), telomerase RNAs and long non-coding RNAs (lncRNAs). Mediates recruitment of cytoplasmic dynein to the nuclear envelope, probably as component of the integrator complex. In Pongo abelii (Sumatran orangutan), this protein is Integrator complex subunit 12 (INTS12).